Consider the following 92-residue polypeptide: Small ribosomal subunit protein uS19 (92 aa).

It belongs to the universal ribosomal protein uS19 family.

Protein S19 forms a complex with S13 that binds strongly to the 16S ribosomal RNA. The polypeptide is Small ribosomal subunit protein uS19 (Lysinibacillus sphaericus (strain C3-41)).